Consider the following 130-residue polypeptide: Protein AUXIN-REGULATED GENE INVOLVED IN ORGAN SIZE (130 aa).

The interval 65-116 (FSLESLFLLVGLTASLLILPLVLPPLPPPPFMLLLVPIGIMVLLVVLAFMPS) is organ Size Related (OSR) domain. Helical transmembrane passes span 70–90 (LFLL…LPPL) and 94–114 (PFML…LAFM).

Belongs to the plant organ size related (OSR) protein family. Mostly expressed in flowers, inflorescence stems, leaf primordia and young leaves, and, to a lower extent, in siliques, cotyledon vascular bundles, roots (pericycle and root tips) and mature leaves.

It localises to the membrane. The protein localises to the nucleus. The protein resides in the cytoplasm. It is found in the endoplasmic reticulum. Its function is as follows. Promotes cell proliferation-dependent organ growth. Takes part in the AXR1-dependent auxin signaling pathway that requires ANT during organogenesis. The sequence is that of Protein AUXIN-REGULATED GENE INVOLVED IN ORGAN SIZE (ARGOS) from Arabidopsis thaliana (Mouse-ear cress).